We begin with the raw amino-acid sequence, 1503 residues long: DNA-directed RNA polymerase subunit beta' (1503 aa).

4 residues coordinate Zn(2+): Cys71, Cys73, Cys86, and Cys89. Mg(2+) is bound by residues Asp470, Asp472, and Asp474. Cys800, Cys874, Cys881, and Cys884 together coordinate Zn(2+).

It belongs to the RNA polymerase beta' chain family. The RNAP catalytic core consists of 2 alpha, 1 beta, 1 beta' and 1 omega subunit. When a sigma factor is associated with the core the holoenzyme is formed, which can initiate transcription. It depends on Mg(2+) as a cofactor. The cofactor is Zn(2+).

The catalysed reaction is RNA(n) + a ribonucleoside 5'-triphosphate = RNA(n+1) + diphosphate. In terms of biological role, DNA-dependent RNA polymerase catalyzes the transcription of DNA into RNA using the four ribonucleoside triphosphates as substrates. This is DNA-directed RNA polymerase subunit beta' from Sulfurimonas denitrificans (strain ATCC 33889 / DSM 1251) (Thiomicrospira denitrificans (strain ATCC 33889 / DSM 1251)).